Here is a 265-residue protein sequence, read N- to C-terminus: Protein Pars_0096 (265 aa).

This sequence belongs to the CinA family.

The sequence is that of Protein Pars_0096 from Pyrobaculum arsenaticum (strain DSM 13514 / JCM 11321 / PZ6).